We begin with the raw amino-acid sequence, 126 residues long: Probable DNA-directed RNA polymerase II subunit RPB11 (126 aa).

It belongs to the archaeal Rpo11/eukaryotic RPB11/RPC19 RNA polymerase subunit family. Component of the RNA polymerase II (Pol II) complex consisting of 12 subunits.

It localises to the nucleus. Its function is as follows. DNA-dependent RNA polymerase catalyzes the transcription of DNA into RNA using the four ribonucleoside triphosphates as substrates. Component of RNA polymerase II which synthesizes mRNA precursors and many functional non-coding RNAs. Pol II is the central component of the basal RNA polymerase II transcription machinery. It is composed of mobile elements that move relative to each other. RPB11 is part of the core element with the central large cleft. This is Probable DNA-directed RNA polymerase II subunit RPB11 from Plasmodium chabaudi chabaudi.